The chain runs to 325 residues: Biotin synthase (325 aa).

Positions 49–278 constitute a Radical SAM core domain; the sequence is FNGNIVDLCS…KASIRLAGGR (230 aa). [4Fe-4S] cluster-binding residues include Cys-67, Cys-71, and Cys-74. The [2Fe-2S] cluster site is built by Ser-111, Cys-143, Cys-203, and Arg-273.

It belongs to the radical SAM superfamily. Biotin synthase family. Homodimer. It depends on [4Fe-4S] cluster as a cofactor. [2Fe-2S] cluster is required as a cofactor.

The enzyme catalyses (4R,5S)-dethiobiotin + (sulfur carrier)-SH + 2 reduced [2Fe-2S]-[ferredoxin] + 2 S-adenosyl-L-methionine = (sulfur carrier)-H + biotin + 2 5'-deoxyadenosine + 2 L-methionine + 2 oxidized [2Fe-2S]-[ferredoxin]. The protein operates within cofactor biosynthesis; biotin biosynthesis; biotin from 7,8-diaminononanoate: step 2/2. Its function is as follows. Catalyzes the conversion of dethiobiotin (DTB) to biotin by the insertion of a sulfur atom into dethiobiotin via a radical-based mechanism. The polypeptide is Biotin synthase (Clostridium tetani (strain Massachusetts / E88)).